The following is a 246-amino-acid chain: 4'-phosphopantetheinyl transferase Svp (246 aa).

Residues 223 to 232 show a composition bias toward low complexity; the sequence is AGTAEESAEG. The interval 223–246 is disordered; it reads AGTAEESAEGAGKEATADDRTAVP. Over residues 233–246 the composition is skewed to basic and acidic residues; that stretch reads AGKEATADDRTAVP.

Belongs to the P-Pant transferase superfamily. Gsp/Sfp/HetI/AcpT family.

It catalyses the reaction apo-[ACP] + CoA = holo-[ACP] + adenosine 3',5'-bisphosphate + H(+). Its function is as follows. Transfers the 4'-phosphopantetheine moiety from coenzyme A to a Ser of an acyl-carrier-protein. The enzyme is able to transfer the cofactor to a broad range of enzymes with acyl- or peptidyl-carrier protein domains. This Streptomyces mobaraensis (Streptoverticillium mobaraense) protein is 4'-phosphopantetheinyl transferase Svp (svp).